The chain runs to 379 residues: Heme A synthase (379 aa).

The tract at residues 1–28 is disordered; sequence MAGSRSIFEEVQDSQKPAAMPGGVSRDR. 8 helical membrane passes run 35-55, 124-144, 150-170, 183-203, 227-247, 287-307, 318-338, and 341-361; these read VRVF…IGGL, FLGV…SVPV, LLLL…MVHS, RLAV…WYIL, ATGL…VAGI, FFHR…WIMA, AFDW…MTVM, and SPWY…TLIL. Residue His-289 participates in heme binding. Residue His-349 participates in heme binding.

Belongs to the COX15/CtaA family. Type 2 subfamily. As to quaternary structure, interacts with CtaB. Heme b is required as a cofactor.

The protein localises to the cell membrane. The enzyme catalyses Fe(II)-heme o + 2 A + H2O = Fe(II)-heme a + 2 AH2. Its pathway is porphyrin-containing compound metabolism; heme A biosynthesis; heme A from heme O: step 1/1. Catalyzes the conversion of heme O to heme A by two successive hydroxylations of the methyl group at C8. The first hydroxylation forms heme I, the second hydroxylation results in an unstable dihydroxymethyl group, which spontaneously dehydrates, resulting in the formyl group of heme A. This is Heme A synthase from Jannaschia sp. (strain CCS1).